The sequence spans 297 residues: Mitochondrial citrate transporter A (297 aa).

Solcar repeat units lie at residues 12–91, 102–188, and 199–286; these read PSSL…LKSL, PKTV…LKQM, and LGTA…TMDA. The next 6 membrane-spanning stretches (helical) occupy residues 18 to 31, 61 to 81, 99 to 119, 160 to 180, 192 to 212, and 251 to 272; these read IIAG…EIAI, SQWY…AGIR, ISGP…SLLA, FFQG…TRFS, YVAP…GIAG, and KDEG…LIMS.

The protein belongs to the mitochondrial carrier (TC 2.A.29) family.

The protein resides in the mitochondrion inner membrane. The catalysed reaction is citrate(in) + H(+)(in) = citrate(out) + H(+)(out). In terms of biological role, mitochondrial transporter that mediates citrate export from mitochondria to cytoplasm. Both ctpA, ctpB, and ctpD play important roles in citric acid transport across the mitochondrial membrane and function in a redundant manner. The sequence is that of Mitochondrial citrate transporter A from Aspergillus niger (strain ATCC 1015 / CBS 113.46 / FGSC A1144 / LSHB Ac4 / NCTC 3858a / NRRL 328 / USDA 3528.7).